A 343-amino-acid polypeptide reads, in one-letter code: Ribosomal RNA small subunit methyltransferase C (343 aa).

Belongs to the methyltransferase superfamily. RsmC family. Monomer.

It localises to the cytoplasm. It carries out the reaction guanosine(1207) in 16S rRNA + S-adenosyl-L-methionine = N(2)-methylguanosine(1207) in 16S rRNA + S-adenosyl-L-homocysteine + H(+). In terms of biological role, specifically methylates the guanine in position 1207 of 16S rRNA in the 30S particle. The chain is Ribosomal RNA small subunit methyltransferase C from Escherichia coli O17:K52:H18 (strain UMN026 / ExPEC).